The sequence spans 968 residues: Isoleucine--tRNA ligase (968 aa).

The short motif at 68–78 (PYANGALHMGH) is the 'HIGH' region element. Glu584 provides a ligand contact to L-isoleucyl-5'-AMP. The 'KMSKS' region motif lies at 625-629 (KMSKS). Residue Lys628 coordinates ATP. Residues Cys938, Cys941, Cys958, and Cys961 each contribute to the Zn(2+) site.

This sequence belongs to the class-I aminoacyl-tRNA synthetase family. IleS type 1 subfamily. Monomer. Zn(2+) is required as a cofactor.

It localises to the cytoplasm. It catalyses the reaction tRNA(Ile) + L-isoleucine + ATP = L-isoleucyl-tRNA(Ile) + AMP + diphosphate. Catalyzes the attachment of isoleucine to tRNA(Ile). As IleRS can inadvertently accommodate and process structurally similar amino acids such as valine, to avoid such errors it has two additional distinct tRNA(Ile)-dependent editing activities. One activity is designated as 'pretransfer' editing and involves the hydrolysis of activated Val-AMP. The other activity is designated 'posttransfer' editing and involves deacylation of mischarged Val-tRNA(Ile). The sequence is that of Isoleucine--tRNA ligase from Prochlorococcus marinus (strain MIT 9313).